Here is a 498-residue protein sequence, read N- to C-terminus: ATP synthase subunit beta, chloroplastic (498 aa).

172–179 (GGAGVGKT) is a binding site for ATP.

It belongs to the ATPase alpha/beta chains family. As to quaternary structure, F-type ATPases have 2 components, CF(1) - the catalytic core - and CF(0) - the membrane proton channel. CF(1) has five subunits: alpha(3), beta(3), gamma(1), delta(1), epsilon(1). CF(0) has four main subunits: a(1), b(1), b'(1) and c(9-12).

The protein resides in the plastid. The protein localises to the chloroplast thylakoid membrane. It carries out the reaction ATP + H2O + 4 H(+)(in) = ADP + phosphate + 5 H(+)(out). Its function is as follows. Produces ATP from ADP in the presence of a proton gradient across the membrane. The catalytic sites are hosted primarily by the beta subunits. The polypeptide is ATP synthase subunit beta, chloroplastic (Canella winterana (Wild cinnamon)).